A 150-amino-acid chain; its full sequence is Lymphocyte antigen 6 complex locus protein G5c (150 aa).

Residues 1 to 41 form the signal peptide; that stretch reads MRFMAGPAGSQSLGPLCFHSSPQALYTVLLIVLVMMSLVFG. The UPAR/Ly6 domain maps to 60-150; that stretch reads LRCYRCLLET…DPQNRGLYTP (91 aa). Cystine bridges form between Cys-62–Cys-89, Cys-65–Cys-74, Cys-81–Cys-107, and Cys-134–Cys-139. A glycan (N-linked (GlcNAc...) asparagine) is linked at Asn-96.

In terms of assembly, forms oligomers. Post-translationally, N-glycosylated. In terms of tissue distribution, detected in T-cell lines and fetal and adult lung.

The protein localises to the secreted. May have a role in hematopoietic cell differentiation. This chain is Lymphocyte antigen 6 complex locus protein G5c (LY6G5C), found in Homo sapiens (Human).